The sequence spans 83 residues: MSSGGLLLLLGLLTLWEGLTPVSSKDRPDFCELPDDRGPCRGIFHAFYYNPDQRQCLEFIYGGCYGNANNFKTIDECERTCAA.

A signal peptide spans Met1–Ser24. In terms of domain architecture, BPTI/Kunitz inhibitor spans Cys31 to Cys81. Cystine bridges form between Cys31-Cys81, Cys40-Cys64, and Cys56-Cys77.

It belongs to the venom Kunitz-type family. In terms of tissue distribution, expressed by the venom gland.

The protein localises to the secreted. Functionally, serine protease inhibitor. The chain is Kunitz-type serine protease inhibitor carinatin-1 from Tropidechis carinatus (Australian rough-scaled snake).